The following is a 394-amino-acid chain: Elongation factor Tu 2 (394 aa).

In terms of domain architecture, tr-type G spans 10-204; sequence KPHVNVGTIG…YLDSYIPEPE (195 aa). The segment at 19-26 is G1; sequence GHVDHGKT. 19–26 provides a ligand contact to GTP; it reads GHVDHGKT. Residue Thr26 participates in Mg(2+) binding. The segment at 60–64 is G2; it reads GITIN. Residues 81–84 form a G3 region; that stretch reads DCPG. Residues 81–85 and 136–139 each bind GTP; these read DCPGH and NKCD. Residues 136–139 are G4; the sequence is NKCD. The interval 174-176 is G5; that stretch reads SAL.

It belongs to the TRAFAC class translation factor GTPase superfamily. Classic translation factor GTPase family. EF-Tu/EF-1A subfamily. In terms of assembly, monomer.

It localises to the cytoplasm. The enzyme catalyses GTP + H2O = GDP + phosphate + H(+). In terms of biological role, GTP hydrolase that promotes the GTP-dependent binding of aminoacyl-tRNA to the A-site of ribosomes during protein biosynthesis. The polypeptide is Elongation factor Tu 2 (Serratia proteamaculans (strain 568)).